We begin with the raw amino-acid sequence, 484 residues long: AMP nucleosidase (484 aa).

Belongs to the AMP nucleosidase family.

It carries out the reaction AMP + H2O = adenine + D-ribose 5-phosphate. Catalyzes the hydrolysis of the N-glycosidic bond of AMP to form adenine and ribose 5-phosphate. Involved in regulation of AMP concentrations. The sequence is that of AMP nucleosidase from Escherichia coli O157:H7.